The primary structure comprises 301 residues: Protein FdhE homolog (301 aa).

This sequence belongs to the FdhE family.

The protein resides in the cytoplasm. Functionally, necessary for formate dehydrogenase activity. The chain is Protein FdhE homolog from Shewanella baltica (strain OS195).